The chain runs to 197 residues: U1 small nuclear ribonucleoprotein C (197 aa).

Residues 4 to 36 (YYCEYCDIYLTHSSPVGRRQHNQGRKHISAKIE) form a Matrin-type zinc finger. Residues 128–137 (FHNNKRINNI) show a composition bias toward low complexity. The interval 128–178 (FHNNKRINNIPKPYNNYTNKPITNSSYKNDKQDYRNNNESNDNMNSNNFSN) is disordered. Positions 142-154 (NNYTNKPITNSSY) are enriched in polar residues. A compositionally biased stretch (low complexity) spans 164–178 (NNESNDNMNSNNFSN).

This sequence belongs to the U1 small nuclear ribonucleoprotein C family. In terms of assembly, U1 snRNP is composed of the 7 core Sm proteins B/B', D1, D2, D3, E, F and G that assemble in a heptameric protein ring on the Sm site of the small nuclear RNA to form the core snRNP, and at least 3 U1 snRNP-specific proteins U1-70K, U1-A and U1-C. U1-C interacts with U1 snRNA and the 5' splice-site region of the pre-mRNA.

It localises to the nucleus. Component of the spliceosomal U1 snRNP, which is essential for recognition of the pre-mRNA 5' splice-site and the subsequent assembly of the spliceosome. U1-C is directly involved in initial 5' splice-site recognition for both constitutive and regulated alternative splicing. The interaction with the 5' splice-site seems to precede base-pairing between the pre-mRNA and the U1 snRNA. Stimulates commitment or early (E) complex formation by stabilizing the base pairing of the 5' end of the U1 snRNA and the 5' splice-site region. This chain is U1 small nuclear ribonucleoprotein C (SNRPC), found in Plasmodium berghei (strain Anka).